The chain runs to 355 residues: F-box only protein 32 (355 aa).

A Nuclear localization signal motif is present at residues 62 to 67; the sequence is KKRKKD. A Nuclear export signal motif is present at residues 169–173; that stretch reads LLQTL. The 49-residue stretch at 223–271 folds into the F-box domain; it reads LTFTDLPLCLQLNIMQRLSDGRDLVSLGQAAPDLHVLSEDRLLWKKLCQ. Positions 280–295 match the Bipartite nuclear localization signal motif; the sequence is RKRLILSDKGQLDWKK.

As to quaternary structure, part of the SCF (SKP1-CUL1-F-box) E3 ubiquitin-protein ligase complex SCF(FBXO32) formed of CUL1, SKP1, RBX1 and FBXO32. In terms of tissue distribution, specifically expressed in cardiac and skeletal muscle.

Its subcellular location is the cytoplasm. The protein resides in the nucleus. It functions in the pathway protein modification; protein ubiquitination. Substrate recognition component of a SCF (SKP1-CUL1-F-box protein) E3 ubiquitin-protein ligase complex which mediates the ubiquitination and subsequent proteasomal degradation of target proteins. Probably recognizes and binds to phosphorylated target proteins during skeletal muscle atrophy. Recognizes TERF1. The sequence is that of F-box only protein 32 (FBXO32) from Homo sapiens (Human).